A 993-amino-acid chain; its full sequence is DNA double-strand break repair Rad50 ATPase (993 aa).

ATP contacts are provided by residues Arg-12, 32 to 38 (NGSGKSS), and Gln-133. 2 coiled-coil regions span residues 192–222 (LENLEKLKNEVSESEILKEEILKKYENLEKL) and 402–493 (EELK…LEKT). One can recognise a Zinc-hook domain in the interval 452–556 (ENELKEKYED…KLNEIDSFKL (105 aa)). Zn(2+) is bound by residues Cys-497 and Cys-500. Coiled-coil stretches lie at residues 570–612 (KVEE…LEND), 646–677 (DSSKIENEKKSLENLKDELKNTIYNLEREINL), and 702–731 (ETEKSDFENKLSECKENYEKYMESLAVLKN).

The protein belongs to the SMC family. RAD50 subfamily. Homodimer. Forms a heterotetramer composed of two Mre11 subunits and two Rad50 subunits. Zn(2+) serves as cofactor.

Functionally, part of the Rad50/Mre11 complex, which is involved in the early steps of DNA double-strand break (DSB) repair. The complex may facilitate opening of the processed DNA ends to aid in the recruitment of HerA and NurA. Rad50 controls the balance between DNA end bridging and DNA resection via ATP-dependent structural rearrangements of the Rad50/Mre11 complex. This chain is DNA double-strand break repair Rad50 ATPase, found in Methanococcus maripaludis (strain DSM 14266 / JCM 13030 / NBRC 101832 / S2 / LL).